A 287-amino-acid polypeptide reads, in one-letter code: Co-chaperone protein DjlA (287 aa).

Over 1-6 (MNFIGK) the chain is Periplasmic. A helical transmembrane segment spans residues 7–30 (FLGLIIGWKLGGFFGAICGVILGH). The Cytoplasmic portion of the chain corresponds to 31–287 (LGDKKLYELG…DLICKTKGWK (257 aa)). One can recognise a J domain in the interval 221–287 (DAYKVLGVSA…DLICKTKGWK (67 aa)).

Homodimer.

It is found in the cell inner membrane. In terms of biological role, regulatory DnaK co-chaperone. Direct interaction between DnaK and DjlA is needed for the induction of the wcaABCDE operon, involved in the synthesis of a colanic acid polysaccharide capsule, possibly through activation of the RcsB/RcsC phosphotransfer signaling pathway. The colanic acid capsule may help the bacterium survive conditions outside the host. The chain is Co-chaperone protein DjlA from Pasteurella multocida (strain Pm70).